The primary structure comprises 783 residues: BMP/retinoic acid-inducible neural-specific protein 2 (783 aa).

Positions Met-1–Ala-33 are cleaved as a signal peptide. Residues Arg-85–Thr-281 form the MACPF domain. Asn-185, Asn-354, Asn-473, Asn-579, Asn-626, and Asn-658 each carry an N-linked (GlcNAc...) asparagine glycan.

It belongs to the BRINP family. As to expression, expressed in olfactory bulb, cerebellum and neuronal layers in hippocampus.

It is found in the secreted. Its function is as follows. Inhibits neuronal cell proliferation by negative regulation of the cell cycle transition. This is BMP/retinoic acid-inducible neural-specific protein 2 (Brinp2) from Rattus norvegicus (Rat).